The sequence spans 96 residues: UPF0235 protein SO_3356 (96 aa).

This sequence belongs to the UPF0235 family.

This is UPF0235 protein SO_3356 from Shewanella oneidensis (strain ATCC 700550 / JCM 31522 / CIP 106686 / LMG 19005 / NCIMB 14063 / MR-1).